A 259-amino-acid polypeptide reads, in one-letter code: DNA-directed RNA polymerase 30 kDa polypeptide (259 aa).

A TFIIS-type zinc finger spans residues 155–195; the sequence is YNTPCPNCKSRNTTPMMIQTRAADEPPLVRHACRDCKQHFK. Cys-159, Cys-162, Cys-187, and Cys-190 together coordinate Zn(2+). The interval 220–259 is disordered; the sequence is EILPDNNPSPPESPEPASPIDDGLIRATFDRNDEPPEDDE. Pro residues predominate over residues 226–236; sequence NPSPPESPEPA.

The protein belongs to the poxviridae DNA-directed RNA polymerase 30 kDa subunit family. In terms of assembly, the DNA-dependent RNA polymerase (vRNAP) consists of eight subunits encoded by early viral genes and termed according to their apparent molecular masses Rpo147, Rpo132, Rpo35, Rpo30, Rpo22, Rpo19, Rpo18, and Rpo7. The same holoenzyme, with the addition of the transcription-specificity factor RAP94, is used for early gene expression.

Its subcellular location is the virion. It is found in the host cytoplasm. The enzyme catalyses RNA(n) + a ribonucleoside 5'-triphosphate = RNA(n+1) + diphosphate. Part of the DNA-dependent RNA polymerase which catalyzes the transcription of viral DNA into RNA using the four ribonucleoside triphosphates as substrates. Responsible for the transcription of early, intermediate and late genes. DNA-dependent RNA polymerase associates with the early transcription factor (ETF), itself composed of OPG118 and OPG134, thereby allowing the early genes transcription. Late transcription, and probably also intermediate transcription, require newly synthesized RNA polymerase. The sequence is that of DNA-directed RNA polymerase 30 kDa polypeptide (OPG066) from Homo sapiens (Human).